The following is a 383-amino-acid chain: S-adenosylmethionine synthase 1 (383 aa).

Position 15 (histidine 15) interacts with ATP. Aspartate 17 provides a ligand contact to Mg(2+). K(+) is bound at residue glutamate 43. Residues glutamate 56 and glutamine 99 each coordinate L-methionine. Residues 99–109 (QSPDINLGVSR) form a flexible loop region. Residues 162–164 (DGK), 228–229 (RF), aspartate 237, 243–244 (RK), alanine 260, and lysine 264 each bind ATP. Aspartate 237 is an L-methionine binding site. Residue lysine 268 participates in L-methionine binding.

It belongs to the AdoMet synthase family. Homotetramer; dimer of dimers. Requires Mg(2+) as cofactor. The cofactor is K(+).

It localises to the cytoplasm. The enzyme catalyses L-methionine + ATP + H2O = S-adenosyl-L-methionine + phosphate + diphosphate. It functions in the pathway amino-acid biosynthesis; S-adenosyl-L-methionine biosynthesis; S-adenosyl-L-methionine from L-methionine: step 1/1. In terms of biological role, catalyzes the formation of S-adenosylmethionine (AdoMet) from methionine and ATP. The overall synthetic reaction is composed of two sequential steps, AdoMet formation and the subsequent tripolyphosphate hydrolysis which occurs prior to release of AdoMet from the enzyme. The protein is S-adenosylmethionine synthase 1 of Rhodopseudomonas palustris (strain BisB18).